The chain runs to 777 residues: Nuclear autoantigenic sperm protein (777 aa).

A2 carries the N-acetylalanine modification. K34 carries the N6-acetyllysine modification. A TPR 1 repeat occupies 44–77 (AKKLLGLGQKHLVMGDIPAAVNAFQEAASLLGKK). Residues 117–128 (EEEEGEKTEEES) are histone-binding. A Phosphothreonine modification is found at T124. S128 carries the post-translational modification Phosphoserine. Basic and acidic residues-rich tracts occupy residues 152–186 (MGEKEAQKTEDKSLVKPEMDKEQETEMEKGGREDM), 227–259 (VTSKKPDQEIPGAEEGKSVSETDVQEECREKGG), and 267–276 (IEEKPKEASK). The tract at residues 152 to 496 (MGEKEAQKTE…ALENKSLQEN (345 aa)) is disordered. Positions 211 to 244 (EEGKGAAAPEGLSEAEVTSKKPDQEIPGAEEGKS) are histone-binding. The residue at position 243 (K243) is an N6-acetyllysine. S244 is subject to Phosphoserine. The residue at position 285 (K285) is an N6-acetyllysine. Residues 303-319 (DEPKEQVAASESERGKA) show a composition bias toward basic and acidic residues. S312 is modified (phosphoserine). A compositionally biased stretch (low complexity) spans 342–353 (AADASAAEAGSE). Phosphoserine occurs at positions 399, 411, and 440. The tract at residues 458–501 (EQMKEGEETEGSEEEDKENDKAEETLNDSALENKSLQENEEEEI) is histone-binding. Positions 464–474 (EETEGSEEEDK) are enriched in acidic residues. T466 bears the Phosphothreonine mark. Phosphoserine is present on residues S469, S486, and S492. A compositionally biased stretch (polar residues) spans 484–493 (NDSALENKSL). 2 TPR repeats span residues 531–564 (AQAHLKLGEVSVESENYLQAVEEFQACLNLQEQY) and 573–606 (AETHYQLGLAYGYNSQYDEAVAQFSKSIEVIEKR). Residues 593–648 (VAQFSKSIEVIEKRMAVLNEQMKEAEGSPTEYEKEIEELKELLPEIREKIEDAKES) are a coiled coil. S651 carries the phosphoserine modification. Residues 667–681 (STSGFTPSGGSSSVS) show a composition bias toward low complexity. Residues 667-777 (STSGFTPSGG…AGATVESTAC (111 aa)) form a disordered region. Phosphothreonine is present on T672. Residues S694 and S695 each carry the phosphoserine modification. The Nuclear localization signal motif lies at 705–711 (VRKKRKP). A compositionally biased stretch (basic and acidic residues) spans 710–728 (KPEEESPRKDDAKKAKQEP). The residue at position 715 (S715) is a Phosphoserine. K725 participates in a covalent cross-link: Glycyl lysine isopeptide (Lys-Gly) (interchain with G-Cter in SUMO1). Phosphoserine is present on S734.

Belongs to the NASP family. As to quaternary structure, binds to linker H1 histones. Interacts with histones H2A, H2B, H3 and H4. Interacts with histone H3.3. Interacts with histones H3 and H4; NASP is a histone chaperone that stabilizes and maintains a soluble pool of histone H3-H4 dimers. Interacts with ASF1A and ASF1B; the interaction is probably indirect and mediated by H3-H4. Also binds to HSP90 in the cytoplasm. This interaction stimulates binding of NASP to H1-6/H1T.

The protein resides in the cytoplasm. Its subcellular location is the nucleus. Functionally, component of the histone chaperone network. Binds and stabilizes histone H3-H4 not bound to chromatin to maintain a soluble reservoir and modulate degradation by chaperone-mediated autophagy. Required for DNA replication, normal cell cycle progression and cell proliferation. Forms a cytoplasmic complex with HSP90 and H1 linker histones and stimulates HSP90 ATPase activity. NASP and H1 histone are subsequently released from the complex and translocate to the nucleus where the histone is released for binding to DNA. The protein is Nuclear autoantigenic sperm protein of Bos taurus (Bovine).